A 178-amino-acid chain; its full sequence is Peptide deformylase (178 aa).

2 residues coordinate Fe cation: C92 and H134. E135 is an active-site residue. Position 138 (H138) interacts with Fe cation.

The protein belongs to the polypeptide deformylase family. Requires Fe(2+) as cofactor.

It catalyses the reaction N-terminal N-formyl-L-methionyl-[peptide] + H2O = N-terminal L-methionyl-[peptide] + formate. Its function is as follows. Removes the formyl group from the N-terminal Met of newly synthesized proteins. Requires at least a dipeptide for an efficient rate of reaction. N-terminal L-methionine is a prerequisite for activity but the enzyme has broad specificity at other positions. The protein is Peptide deformylase of Alkalilimnicola ehrlichii (strain ATCC BAA-1101 / DSM 17681 / MLHE-1).